The sequence spans 860 residues: Leucine--tRNA ligase (860 aa).

A 'HIGH' region motif is present at residues 42-52 (PYPSGRLHMGH). Residues 619-623 (KMSKS) carry the 'KMSKS' region motif. Residue K622 coordinates ATP.

This sequence belongs to the class-I aminoacyl-tRNA synthetase family.

It localises to the cytoplasm. It carries out the reaction tRNA(Leu) + L-leucine + ATP = L-leucyl-tRNA(Leu) + AMP + diphosphate. The polypeptide is Leucine--tRNA ligase (Edwardsiella ictaluri (strain 93-146)).